The sequence spans 305 residues: Serine/threonine-protein phosphatase PP1-delta (305 aa).

4 residues coordinate Mn(2+): D62, H64, D90, and N122. H123 functions as the Proton donor in the catalytic mechanism. Residues H172 and H247 each contribute to the Mn(2+) site.

Belongs to the PPP phosphatase family. Expressed in male germline including spermatocytes, spermatids and spermatozoa.

The protein localises to the chromosome. It is found in the cell projection. It localises to the pseudopodium. The protein resides in the cytoplasm. It catalyses the reaction O-phospho-L-seryl-[protein] + H2O = L-seryl-[protein] + phosphate. It carries out the reaction O-phospho-L-threonyl-[protein] + H2O = L-threonyl-[protein] + phosphate. Probable phosphatase which plays a redundant role with gsp-4 in spermatogenesis by regulating sister chromatid segregation during meiosis. In addition, involved in sperm motility by controlling the dynamic disassembly of major sperm proteins (MSP) in the spermatozoan pseudopodium. The sequence is that of Serine/threonine-protein phosphatase PP1-delta from Caenorhabditis elegans.